The sequence spans 33 residues: Beta/kappa-theraphotoxin-Hlv1a (33 aa).

3 disulfides stabilise this stretch: C2–C17, C9–C22, and C16–C29. The residue at position 33 (I33) is an Isoleucine amide.

This sequence belongs to the neurotoxin 10 (Hwtx-1) family. 11 (haplotoxin-2) subfamily. In terms of tissue distribution, expressed by the venom gland.

It is found in the secreted. Spider venom neurotoxin that blocks voltage-gated sodium channel Nav1.3/SCN3A in human (IC(50)=80 nM) and rat (IC(50)=160 nM). Partially inhibits human Kv11.1/KCNH2/ERG (25% at 175 uM). This is Beta/kappa-theraphotoxin-Hlv1a from Cyriopagopus lividus (Cobalt blue tarantula).